The primary structure comprises 152 residues: Arginine repressor (152 aa).

Belongs to the ArgR family.

The protein resides in the cytoplasm. It participates in amino-acid biosynthesis; L-arginine biosynthesis [regulation]. In terms of biological role, regulates arginine biosynthesis genes. This Caldicellulosiruptor bescii (strain ATCC BAA-1888 / DSM 6725 / KCTC 15123 / Z-1320) (Anaerocellum thermophilum) protein is Arginine repressor.